An 81-amino-acid chain; its full sequence is Gamma-conotoxin-like TxMEKL-0511 (81 aa).

An N-terminal signal peptide occupies residues Met-1 to Ala-19. The propeptide occupies Leu-20–Arg-45. 3 disulfide bridges follow: Cys-49–Cys-63, Cys-56–Cys-67, and Cys-62–Cys-72.

Belongs to the conotoxin O2 superfamily. Expressed by the venom duct.

Its subcellular location is the secreted. In terms of biological role, gamma-conotoxins may act on voltage-gated non-specific cation pacemaker channels (HCN). This chain is Gamma-conotoxin-like TxMEKL-0511, found in Conus textile (Cloth-of-gold cone).